Reading from the N-terminus, the 514-residue chain is Alanine--glyoxylate aminotransferase 2, mitochondrial (514 aa).

Residues 1–41 constitute a mitochondrion transit peptide; it reads MTLIWRHLLRPLCLVTSAPRILEMHPFLSLGTSRTSVTKLS. An N6-acetyllysine; alternate modification is found at Lys-71. At Lys-71 the chain carries N6-succinyllysine; alternate. Position 84 is an N6-acetyllysine (Lys-84). Residue Lys-262 is modified to N6-acetyllysine; alternate. An N6-succinyllysine; alternate modification is found at Lys-262. Position 304 is an N6-succinyllysine (Lys-304). Position 350 is an N6-(pyridoxal phosphate)lysine (Lys-350). Residues Lys-417 and Lys-420 each carry the N6-acetyllysine; alternate modification. N6-succinyllysine; alternate is present on residues Lys-417 and Lys-420.

It belongs to the class-III pyridoxal-phosphate-dependent aminotransferase family. Homotetramer. Pyridoxal 5'-phosphate serves as cofactor. In terms of tissue distribution, expressed in the convoluted tubule in the kidney and in the liver hepatocytes (at protein level).

The protein resides in the mitochondrion. It catalyses the reaction glyoxylate + L-alanine = glycine + pyruvate. The enzyme catalyses (R)-3-amino-2-methylpropanoate + pyruvate = 2-methyl-3-oxopropanoate + L-alanine. It carries out the reaction 3-oxopropanoate + L-alanine = beta-alanine + pyruvate. The catalysed reaction is 2-oxobutanoate + L-alanine = (2S)-2-aminobutanoate + pyruvate. It catalyses the reaction N(omega),N(omega)-dimethyl-L-arginine + pyruvate = 5-(3,3-dimethylguanidino)-2-oxopentanoate + L-alanine. The enzyme catalyses N(omega),N('omega)-dimethyl-L-arginine + pyruvate = 5-(3,3'-dimethylguanidino)-2-oxopentanoate + L-alanine. It carries out the reaction N(omega),N(omega)-dimethyl-L-arginine + glyoxylate = 5-(3,3-dimethylguanidino)-2-oxopentanoate + glycine. The catalysed reaction is N(omega),N('omega)-dimethyl-L-arginine + glyoxylate = 5-(3,3'-dimethylguanidino)-2-oxopentanoate + glycine. It catalyses the reaction N(omega)-methyl-L-arginine + pyruvate = 5-(3-methylguanidino)-2-oxopentanoate + L-alanine. The enzyme catalyses N(omega)-methyl-L-arginine + glyoxylate = 5-(3-methylguanidino)-2-oxopentanoate + glycine. It carries out the reaction L-ornithine + pyruvate = 5-amino-2-oxopentanoate + L-alanine. The catalysed reaction is L-ornithine + glyoxylate = 5-amino-2-oxopentanoate + glycine. It catalyses the reaction (2S)-2-aminobutanoate + glyoxylate = 2-oxobutanoate + glycine. The enzyme catalyses N(omega),N(omega)-dimethyl-L-arginine + oxaloacetate = 5-(3,3-dimethylguanidino)-2-oxopentanoate + L-aspartate. It carries out the reaction oxaloacetate + L-alanine = L-aspartate + pyruvate. The catalysed reaction is N(omega),N(omega)-dimethyl-L-arginine + 2-oxobutanoate = 5-(3,3-dimethylguanidino)-2-oxopentanoate + (2S)-2-aminobutanoate. It catalyses the reaction 2-oxopentanoate + N(omega),N(omega)-dimethyl-L-arginine = 5-(3,3-dimethylguanidino)-2-oxopentanoate + L-2-aminopentanoate. The enzyme catalyses 2-oxohexanoate + N(omega),N(omega)-dimethyl-L-arginine = L-2-aminohexanoate + 5-(3,3-dimethylguanidino)-2-oxopentanoate. Its function is as follows. Multifunctional aminotransferase with a broad substrate specificity. Catalyzes the conversion of glyoxylate to glycine using alanine as the amino donor. Catalyzes metabolism of not L- but the D-isomer of D-beta-aminoisobutyric acid to generate 2-methyl-3-oxopropanoate and alanine. Catalyzes the transfer of the amino group from beta-alanine to pyruvate to yield L-alanine and 3-oxopropanoate. Can metabolize NG-monomethyl-L-arginine (NMMA), asymmetric NG,NG-dimethyl-L-arginine (ADMA) and symmetric NG,N'G-dimethyl-L-arginine (SDMA). ADMA is a potent inhibitor of nitric-oxide (NO) synthase, and this activity provides mechanism through which the kidney regulates blood pressure. This is Alanine--glyoxylate aminotransferase 2, mitochondrial (AGXT2) from Homo sapiens (Human).